Reading from the N-terminus, the 275-residue chain is MIQFTKMHGLGNDFMVVDGVTQNVFFSPEQIRRLADRNFGIGFDQLLLVEPPYDPDLDFHYRIFNADGTEVEQCGNGARCFARFVRNKGLTNKSKIRVSTSSGKMTLRLERDGTVTVNMGVPILEPSQIPFKAKKPEKTYLLQTPMQTFLCGAASMGNPHCVLDVEDVASASVAEIGAMLTKHERFPRGVNVGFMQVVDSGHIKLRVYERGAAETLACGTGACAAVVVGQVQGKLGQQVRVDLPGGTLTINWEGEGKPLWMTGPAQHVYDGQIQL.

Asn12, Gln45, and Asn65 together coordinate substrate. Catalysis depends on Cys74, which acts as the Proton donor. Substrate is bound by residues 75 to 76 (GN), Asn158, Asn191, and 209 to 210 (ER). Cys218 acts as the Proton acceptor in catalysis. Residue 219 to 220 (GT) participates in substrate binding.

Belongs to the diaminopimelate epimerase family. In terms of assembly, homodimer.

The protein resides in the cytoplasm. It catalyses the reaction (2S,6S)-2,6-diaminopimelate = meso-2,6-diaminopimelate. It functions in the pathway amino-acid biosynthesis; L-lysine biosynthesis via DAP pathway; DL-2,6-diaminopimelate from LL-2,6-diaminopimelate: step 1/1. In terms of biological role, catalyzes the stereoinversion of LL-2,6-diaminopimelate (L,L-DAP) to meso-diaminopimelate (meso-DAP), a precursor of L-lysine and an essential component of the bacterial peptidoglycan. The chain is Diaminopimelate epimerase from Shewanella baltica (strain OS223).